Here is a 175-residue protein sequence, read N- to C-terminus: Large ribosomal subunit protein uL6 (175 aa).

This sequence belongs to the universal ribosomal protein uL6 family. As to quaternary structure, part of the 50S ribosomal subunit.

Functionally, this protein binds to the 23S rRNA, and is important in its secondary structure. It is located near the subunit interface in the base of the L7/L12 stalk, and near the tRNA binding site of the peptidyltransferase center. This Xylella fastidiosa (strain 9a5c) protein is Large ribosomal subunit protein uL6.